A 307-amino-acid chain; its full sequence is Chlorophyll a-b binding protein 1, chloroplastic (307 aa).

The N-terminal 44 residues, 1–44, are a transit peptide targeting the chloroplast; the sequence is MAPYSVVASVLAAAPPQQSGSVRQLPSTINRAITQRSQSRHVAS. The interval 34 to 54 is disordered; sequence TQRSQSRHVASASSASSPTTM. Residues Thr-52, Glu-63, Ile-64, Gly-65, Tyr-68, Leu-81, Pro-86, Arg-89, Gly-90, Phe-91, and Asp-92 each contribute to the chlorophyll a site. Residue Leu-96 participates in loroxanthin binding. The helical transmembrane segment at 111-143 threads the bilayer; it reads NYDESRLRWLLEGELYNGRLAMLAVVGVLTVEA. The chlorophyll a site is built by Leu-120, Glu-124, Asn-127, Met-132, and Lys-146. Trp-149 is a binding site for loroxanthin. 8 residues coordinate chlorophyll a: Glu-151, Tyr-163, His-171, Glu-178, Arg-181, Glu-190, Arg-198, and Asp-200. The helical transmembrane segment at 161–186 threads the bilayer; sequence TPYVVAVVGGHLAFALLEKKRLENFR. Positions 200 and 202 each coordinate all-trans-violaxanthin. Chlorophyll a-binding residues include Leu-204, Asn-208, Tyr-214, Asn-215, Ala-218, Asn-222, and Arg-224. The chain crosses the membrane as a helical span at residues 213–238; sequence DYNRQAEVRNCRLAMLTFLGFSVQAW. Position 230 (Phe-230) interacts with loroxanthin. Position 233 (Phe-233) interacts with all-trans-violaxanthin. Gln-236 serves as a coordination point for chlorophyll a. Pro-244 is an all-trans-violaxanthin binding site. Chlorophyll a contacts are provided by Asn-247, His-251, Pro-255, Phe-256, Ala-258, Asn-259, Ile-260, and Phe-274. Residues 265 to 289 form a helical membrane-spanning segment; it reads DRGTNVVAIFSAFAAVMHIAELARE.

Belongs to the light-harvesting chlorophyll a/b-binding (LHC) protein family. In terms of assembly, homooligomer. Component of a light-harvesting complex (LHC) consisting of 11 chlorophyll a-b binding proteins. Requires Binds 11 chlorophylls (Chl-a and Chl-b) and the 2 carotenoids violaxanthin and loroxanthin. as cofactor.

The protein resides in the plastid. The protein localises to the chloroplast thylakoid membrane. In terms of biological role, component of a light-harvesting complex (LHC). The LHC functions as a light receptor, it captures and delivers excitation energy to photosystems with which it is closely associated. Functions in a far-red LHC by absorbing far-red light and promoting photosystem II (PSII) excitation, likely with entropy-driven uphill excitation energy transfer. Exhibits a typical absorption band at 671 nm (Qy band), as well as a large far-red absorption band at 706.5 together with fluorescence emission at around 713 nm (F713). This is Chlorophyll a-b binding protein 1, chloroplastic from Prasiola crispa (Green alga).